Here is a 244-residue protein sequence, read N- to C-terminus: MTTLVLLRHGESNWNRENLFTGWVDVDLSEKGLKEATRGGELLAEAGVLPDVVHTSLLTRAIRTAWLALDAAGRTWVPVRRSWRLNERHYGGLQGLNKAETLEKFGEEQFQLWRRSYDTPPPEIGPEQVSGVDERYADLAPDLIPRTECLADVVARMLPYWYDAIVPDLRAGRTVLVAAHGNSLRALVKHLDHISDTDIAGLNIPTGIPLRYELDDDLGVLSSGYLDPDAAASAAAAVAAQGKK.

Residues 8–15, 21–22, arginine 60, 87–90, lysine 98, 114–115, and 181–182 each bind substrate; these read RHGESNWN, TG, ERHY, RR, and GN. The Tele-phosphohistidine intermediate role is filled by histidine 9. The Proton donor/acceptor role is filled by glutamate 87.

Belongs to the phosphoglycerate mutase family. BPG-dependent PGAM subfamily.

It catalyses the reaction (2R)-2-phosphoglycerate = (2R)-3-phosphoglycerate. It participates in carbohydrate degradation; glycolysis; pyruvate from D-glyceraldehyde 3-phosphate: step 3/5. Its function is as follows. Catalyzes the interconversion of 2-phosphoglycerate and 3-phosphoglycerate. This chain is 2,3-bisphosphoglycerate-dependent phosphoglycerate mutase, found in Frankia alni (strain DSM 45986 / CECT 9034 / ACN14a).